The following is a 119-amino-acid chain: Acidic phospholipase A2 DE-II (119 aa).

7 cysteine pairs are disulfide-bonded: Cys-11–Cys-72, Cys-26–Cys-118, Cys-28–Cys-44, Cys-43–Cys-99, Cys-50–Cys-92, Cys-60–Cys-85, and Cys-79–Cys-90. 3 residues coordinate Ca(2+): Tyr-27, Gly-29, and Gly-31. Residue His-47 is part of the active site. Asp-48 lines the Ca(2+) pocket. The active site involves Asp-93.

Belongs to the phospholipase A2 family. Group I subfamily. D49 sub-subfamily. Ca(2+) serves as cofactor. In terms of tissue distribution, expressed by the venom gland.

It is found in the secreted. It carries out the reaction a 1,2-diacyl-sn-glycero-3-phosphocholine + H2O = a 1-acyl-sn-glycero-3-phosphocholine + a fatty acid + H(+). Functionally, PLA2 catalyzes the calcium-dependent hydrolysis of the 2-acyl groups in 3-sn-phosphoglycerides. In Naja melanoleuca (Forest cobra), this protein is Acidic phospholipase A2 DE-II.